Consider the following 510-residue polypeptide: ATP synthase subunit alpha (510 aa).

170 to 177 (GDRQTGKT) is a binding site for ATP.

The protein belongs to the ATPase alpha/beta chains family. In terms of assembly, F-type ATPases have 2 components, CF(1) - the catalytic core - and CF(0) - the membrane proton channel. CF(1) has five subunits: alpha(3), beta(3), gamma(1), delta(1), epsilon(1). CF(0) has three main subunits: a(1), b(2) and c(9-12). The alpha and beta chains form an alternating ring which encloses part of the gamma chain. CF(1) is attached to CF(0) by a central stalk formed by the gamma and epsilon chains, while a peripheral stalk is formed by the delta and b chains.

Its subcellular location is the cell inner membrane. It carries out the reaction ATP + H2O + 4 H(+)(in) = ADP + phosphate + 5 H(+)(out). Produces ATP from ADP in the presence of a proton gradient across the membrane. The alpha chain is a regulatory subunit. The polypeptide is ATP synthase subunit alpha (Caulobacter sp. (strain K31)).